We begin with the raw amino-acid sequence, 690 residues long: Ligand of Numb protein X 2 (690 aa).

Residues 50-88 (CHICLQPLLQPLDTPCGHTFCYKCLRNFLQEKDFCPLDR) form an RING-type zinc finger. The tract at residues 198–224 (STWSEEPGLDNPAFEESAGADTTQQPL) is disordered. The short motif at 208–211 (NPAF) is the NPXY motif element. 4 PDZ domains span residues 233-318 (TIEI…LRER), 339-422 (QVAL…ARPG), 468-554 (HITV…KALE), and 600-688 (DIVL…WPGS). Residues 418-455 (IARPGKPQPGNTIREAGNHSSSSQHHTPPPYYSRPSSH) form a disordered region.

As to quaternary structure, interacts with the phosphotyrosine interaction domain of NUMB.

In Homo sapiens (Human), this protein is Ligand of Numb protein X 2 (LNX2).